A 107-amino-acid polypeptide reads, in one-letter code: Death-associated protein-like 1 (107 aa).

Residues 1 to 26 are disordered; it reads MANEVQVQLSPLKGGHPPAVKAGGKR.

Detected in the corneal epithelium, and only in trace amounts in the liver, bladder, brain, heart, and stomach.

May play a role in the early stages of epithelial differentiation or in apoptosis. The protein is Death-associated protein-like 1 (DAPL1) of Bos taurus (Bovine).